The primary structure comprises 490 residues: Cytochrome P450 71B29 (490 aa).

A helical transmembrane segment spans residues 1 to 21 (MAIILCFLILLPLILIFLKKL). Cys440 is a binding site for heme.

Belongs to the cytochrome P450 family. The cofactor is heme.

The protein resides in the membrane. The sequence is that of Cytochrome P450 71B29 (CYP71B29) from Arabidopsis thaliana (Mouse-ear cress).